Consider the following 59-residue polypeptide: Inner kinetochore subunit fta6 (59 aa).

As to quaternary structure, component of the inner kinetochore constitutive centromere-associated network (CCAN) (also known as central kinetochore Sim4 complex in fission yeast), which is composed of at least cnl2, cnp3, cnp20, fta1, fta2, fta3, fta4, fta6, fta7, mal2, mhf1, mhf2, mis6, mis15, mis17, sim4 and wip1.

It localises to the nucleus. It is found in the chromosome. The protein localises to the centromere. The protein resides in the kinetochore. Its subcellular location is the cytoplasm. It localises to the cytoskeleton. It is found in the microtubule organizing center. The protein localises to the spindle pole body. Functionally, component of the kinetochore, a multiprotein complex that assembles on centromeric DNA and attaches chromosomes to spindle microtubules, mediating chromosome segregation and sister chromatid segregation during meiosis and mitosis. Component of the inner kinetochore constitutive centromere-associated network (CCAN), which serves as a structural platform for outer kinetochore assembly. This is Inner kinetochore subunit fta6 (fta6) from Schizosaccharomyces pombe (strain 972 / ATCC 24843) (Fission yeast).